The primary structure comprises 483 residues: Glutamyl-tRNA(Gln) amidotransferase subunit A (483 aa).

Residues Lys76 and Ser151 each act as charge relay system in the active site. Ser175 acts as the Acyl-ester intermediate in catalysis.

The protein belongs to the amidase family. GatA subfamily. As to quaternary structure, heterotrimer of A, B and C subunits.

It carries out the reaction L-glutamyl-tRNA(Gln) + L-glutamine + ATP + H2O = L-glutaminyl-tRNA(Gln) + L-glutamate + ADP + phosphate + H(+). Functionally, allows the formation of correctly charged Gln-tRNA(Gln) through the transamidation of misacylated Glu-tRNA(Gln) in organisms which lack glutaminyl-tRNA synthetase. The reaction takes place in the presence of glutamine and ATP through an activated gamma-phospho-Glu-tRNA(Gln). In Pseudomonas syringae pv. tomato (strain ATCC BAA-871 / DC3000), this protein is Glutamyl-tRNA(Gln) amidotransferase subunit A.